Here is a 456-residue protein sequence, read N- to C-terminus: Bifunctional protein GlmU (456 aa).

Residues 1–229 (MYKSAVILAA…PDEIKGVNSR (229 aa)) form a pyrophosphorylase region. UDP-N-acetyl-alpha-D-glucosamine is bound by residues 8–11 (LAAG), lysine 22, glutamine 73, and 78–79 (GT). Aspartate 103 is a binding site for Mg(2+). UDP-N-acetyl-alpha-D-glucosamine contacts are provided by glycine 140, glutamate 155, asparagine 170, and asparagine 227. Asparagine 227 contributes to the Mg(2+) binding site. Residues 230–250 (GQLAEAEEILRLRINERHMEN) form a linker region. Residues 251-456 (GVTLIDPKNT…GWVAKKGLKK (206 aa)) are N-acetyltransferase. The UDP-N-acetyl-alpha-D-glucosamine site is built by arginine 332 and lysine 350. Histidine 362 acts as the Proton acceptor in catalysis. 2 residues coordinate UDP-N-acetyl-alpha-D-glucosamine: tyrosine 365 and asparagine 376. Acetyl-CoA is bound by residues 385 to 386 (NY), alanine 422, and arginine 439.

It in the N-terminal section; belongs to the N-acetylglucosamine-1-phosphate uridyltransferase family. The protein in the C-terminal section; belongs to the transferase hexapeptide repeat family. In terms of assembly, homotrimer. Requires Mg(2+) as cofactor.

It is found in the cytoplasm. It carries out the reaction alpha-D-glucosamine 1-phosphate + acetyl-CoA = N-acetyl-alpha-D-glucosamine 1-phosphate + CoA + H(+). The catalysed reaction is N-acetyl-alpha-D-glucosamine 1-phosphate + UTP + H(+) = UDP-N-acetyl-alpha-D-glucosamine + diphosphate. The protein operates within nucleotide-sugar biosynthesis; UDP-N-acetyl-alpha-D-glucosamine biosynthesis; N-acetyl-alpha-D-glucosamine 1-phosphate from alpha-D-glucosamine 6-phosphate (route II): step 2/2. It functions in the pathway nucleotide-sugar biosynthesis; UDP-N-acetyl-alpha-D-glucosamine biosynthesis; UDP-N-acetyl-alpha-D-glucosamine from N-acetyl-alpha-D-glucosamine 1-phosphate: step 1/1. Its pathway is bacterial outer membrane biogenesis; LPS lipid A biosynthesis. In terms of biological role, catalyzes the last two sequential reactions in the de novo biosynthetic pathway for UDP-N-acetylglucosamine (UDP-GlcNAc). The C-terminal domain catalyzes the transfer of acetyl group from acetyl coenzyme A to glucosamine-1-phosphate (GlcN-1-P) to produce N-acetylglucosamine-1-phosphate (GlcNAc-1-P), which is converted into UDP-GlcNAc by the transfer of uridine 5-monophosphate (from uridine 5-triphosphate), a reaction catalyzed by the N-terminal domain. This is Bifunctional protein GlmU from Clostridium novyi (strain NT).